The sequence spans 501 residues: Zinc finger C3HC-type protein 1 (501 aa).

A2 carries the post-translational modification N-acetylalanine. The disordered stretch occupies residues 21-73 (VVRSPEGTPQKVRELIDEGIVPEEGGTEPKDTAATFQSVDGSPQAEQSPLEST). Position 24 is a phosphoserine (S24). T28 is subject to Phosphothreonine. The span at 54–72 (ATFQSVDGSPQAEQSPLES) shows a compositional bias: polar residues. A phosphoserine mark is found at S58, S62, and S68. T84 carries the post-translational modification Phosphothreonine. A C3HC-type zinc finger spans residues 102–156 (CAKYGWVTVECDMLKCSSCQAFLCASLQPTFDFGRYKERCAELKKSLCSAHEKFC). The disordered stretch occupies residues 302 to 421 (SPIPGVEGRP…TSPRSFFDPT (120 aa)). Phosphoserine is present on residues S320 and S328. The segment covering 326–338 (TRSQDATVSPGSE) has biased composition (polar residues). Phosphothreonine is present on T332. Phosphoserine occurs at positions 334, 337, 343, 353, 358, 369, and 380. Polar residues-rich tracts occupy residues 350–359 (RTRSWESSSP) and 369–383 (SPTTRSRPVTRSMGT). T383 is subject to Phosphothreonine. S394 is modified (phosphoserine). Residues 395–401 (PLRRTKR) carry the Nuclear localization signal motif. Phosphoserine occurs at positions 406 and 482. The span at 406-420 (SSSSSDTSPRSFFDP) shows a compositional bias: low complexity.

As to quaternary structure, interacts with TPR; this interaction mediates ZC3HC1 nuclear envelopes (NE)-association but also required for proper positioning of a substantial amount of TPR at the nuclear basket (NB). Post-translationally, phosphorylated. May also be weakly phosphorylated on Tyr residues.

It is found in the nucleus. Its subcellular location is the nucleus envelope. Required for proper positioning of a substantial amount of TPR at the nuclear basket (NB) through interaction with TPR. The polypeptide is Zinc finger C3HC-type protein 1 (Zc3hc1) (Mus musculus (Mouse)).